We begin with the raw amino-acid sequence, 340 residues long: Phospho-N-acetylmuramoyl-pentapeptide-transferase (340 aa).

Transmembrane regions (helical) follow at residues 24 to 44 (VPFG…LPVL), 69 to 89 (TMGG…GSGW), 95 to 115 (AVAL…WLVI), 129 to 149 (LLLQ…QGIP), 156 to 176 (GIGA…VLVG), 196 to 216 (ALVL…LVAF), 235 to 255 (LFMG…LALL), 260 to 280 (WALA…ILQV), and 316 to 336 (VVGC…AWWH).

Belongs to the glycosyltransferase 4 family. MraY subfamily. The cofactor is Mg(2+).

The protein resides in the cell inner membrane. It catalyses the reaction UDP-N-acetyl-alpha-D-muramoyl-L-alanyl-gamma-D-glutamyl-meso-2,6-diaminopimeloyl-D-alanyl-D-alanine + di-trans,octa-cis-undecaprenyl phosphate = di-trans,octa-cis-undecaprenyl diphospho-N-acetyl-alpha-D-muramoyl-L-alanyl-D-glutamyl-meso-2,6-diaminopimeloyl-D-alanyl-D-alanine + UMP. It participates in cell wall biogenesis; peptidoglycan biosynthesis. In terms of biological role, catalyzes the initial step of the lipid cycle reactions in the biosynthesis of the cell wall peptidoglycan: transfers peptidoglycan precursor phospho-MurNAc-pentapeptide from UDP-MurNAc-pentapeptide onto the lipid carrier undecaprenyl phosphate, yielding undecaprenyl-pyrophosphoryl-MurNAc-pentapeptide, known as lipid I. The polypeptide is Phospho-N-acetylmuramoyl-pentapeptide-transferase (Synechococcus sp. (strain JA-3-3Ab) (Cyanobacteria bacterium Yellowstone A-Prime)).